The sequence spans 382 residues: D-galactonate dehydratase (382 aa).

D183 serves as a coordination point for Mg(2+). Catalysis depends on H185, which acts as the Proton donor. The Mg(2+) site is built by E209 and E235. The active-site Proton acceptor is the H285. The disordered stretch occupies residues 361–382 (NENPPDWRNPVWRHSDGSIAEW).

Belongs to the mandelate racemase/muconate lactonizing enzyme family. GalD subfamily. It depends on Mg(2+) as a cofactor.

The enzyme catalyses D-galactonate = 2-dehydro-3-deoxy-D-galactonate + H2O. It functions in the pathway carbohydrate acid metabolism; D-galactonate degradation; D-glyceraldehyde 3-phosphate and pyruvate from D-galactonate: step 1/3. Catalyzes the dehydration of D-galactonate to 2-keto-3-deoxy-D-galactonate. This Xanthomonas axonopodis pv. citri (strain 306) protein is D-galactonate dehydratase.